The chain runs to 398 residues: Mu-type opioid receptor (398 aa).

Topologically, residues 1–66 (MDSSAGPGNI…CPQTGSPSMV (66 aa)) are extracellular. 4 N-linked (GlcNAc...) asparagine glycosylation sites follow: asparagine 9, asparagine 31, asparagine 38, and asparagine 46. Residues 67–91 (TAITIMALYSIVCVVGLFGNFLVMY) traverse the membrane as a helical segment. Residues 92 to 104 (VIVRYTKMKTATN) are Cytoplasmic-facing. A helical membrane pass occupies residues 105–129 (IYIFNLALADALATSTLPFQSVNYL). Topologically, residues 130–140 (MGTWPFGNILC) are extracellular. Cysteines 140 and 217 form a disulfide. A helical membrane pass occupies residues 141 to 163 (KIVISIDYYNMFTSIFTLCTMSV). Over 164-183 (DRYIAVCHPVKALDFRTPRN) the chain is Cytoplasmic. Tyrosine 166 is subject to Phosphotyrosine. The chain crosses the membrane as a helical span at residues 184-205 (AKIVNVCNWILSSAIGLPVMFM). At 206–228 (ATTKYRQGSIDCTLTFSHPTWYW) the chain is on the extracellular side. The helical transmembrane segment at 229–253 (ENLLKICVFIFAFIMPVLIITVCYG) threads the bilayer. Over 254 to 277 (LMILRLKSVRMLSGSKEKDRNLRR) the chain is Cytoplasmic. A helical membrane pass occupies residues 278–304 (ITRMVLVVVAVFIVCWTPIHIYVIIKA). Topologically, residues 305–312 (LITIPETT) are extracellular. A helical membrane pass occupies residues 313–336 (FQTVSWHFCIALGYTNSCLNPVLY). Residues 332-336 (NPVLY) carry the NPxxY; plays a role in stabilizing the activated conformation of the receptor motif. The Cytoplasmic segment spans residues 337–398 (AFLDENFKRC…NLEAETAPLP (62 aa)). Cysteine 351 carries S-palmitoyl cysteine lipidation. Residues 362–383 (NSARIRQNTREHPSTANTVDRT) are disordered. A Phosphoserine modification is found at serine 363. Threonine 370 carries the phosphothreonine modification. Serine 375 is modified (phosphoserine). The residue at position 394 (threonine 394) is a Phosphothreonine.

This sequence belongs to the G-protein coupled receptor 1 family. As to quaternary structure, forms homooligomers and heterooligomers with other GPCRs, such as OPRD1, OPRK1, OPRL1, NPFFR2, ADRA2A, SSTR2, CNR1 and CCR5 (probably in dimeric forms). Interacts with heterotrimeric G proteins; interaction with a heterotrimeric complex containing GNAI1, GNB1 and GNG2 stabilizes the active conformation of the receptor and increases its affinity for endomorphin-2, the synthetic opioid peptide DAMGO and for morphinan agonists. Interacts with PPL; the interaction disrupts agonist-mediated G-protein activation. Interacts (via C-terminus) with DNAJB4 (via C-terminus). Interacts with calmodulin; the interaction inhibits the constitutive activity of OPRM1; it abolishes basal and attenuates agonist-stimulated G-protein coupling. Interacts with FLNA, PLD2, RANBP9 and WLS and GPM6A. Interacts with RTP4. Interacts with SYP and GNAS. Interacts with RGS9, RGS17, RGS20, RGS4, PPP1R9B and HINT1. Isoform 9 interacts with GRPR. Post-translationally, phosphorylated. Differentially phosphorylated in basal and agonist-induced conditions. Agonist-mediated phosphorylation modulates receptor internalization. Phosphorylated by GRK2 in a agonist-dependent manner. Phosphorylation at Tyr-166 requires receptor activation, is dependent on non-receptor protein tyrosine kinase Src and results in a decrease in agonist efficacy by reducing G-protein coupling efficiency. Phosphorylated on tyrosine residues; the phosphorylation is involved in agonist-induced G-protein-independent receptor down-regulation. Phosphorylation at Ser-375 is involved in G-protein-dependent but not beta-arrestin-dependent activation of the ERK pathway. Ubiquitinated. A basal ubiquitination seems not to be related to degradation. Ubiquitination is increased upon formation of OPRM1:OPRD1 oligomers leading to proteasomal degradation; the ubiquitination is diminished by RTP4.

It localises to the cell membrane. The protein localises to the cell projection. The protein resides in the axon. It is found in the perikaryon. Its subcellular location is the dendrite. It localises to the endosome. Functionally, receptor for endogenous opioids such as beta-endorphin and endomorphin. Receptor for natural and synthetic opioids including morphine, heroin, DAMGO, fentanyl, etorphine, buprenorphin and methadone. Also activated by enkephalin peptides, such as Met-enkephalin or Met-enkephalin-Arg-Phe, with higher affinity for Met-enkephalin-Arg-Phe. Agonist binding to the receptor induces coupling to an inactive GDP-bound heterotrimeric G-protein complex and subsequent exchange of GDP for GTP in the G-protein alpha subunit leading to dissociation of the G-protein complex with the free GTP-bound G-protein alpha and the G-protein beta-gamma dimer activating downstream cellular effectors. The agonist- and cell type-specific activity is predominantly coupled to pertussis toxin-sensitive G(i) and G(o) G alpha proteins, GNAI1, GNAI2, GNAI3 and GNAO1 isoforms Alpha-1 and Alpha-2, and to a lesser extent to pertussis toxin-insensitive G alpha proteins GNAZ and GNA15. They mediate an array of downstream cellular responses, including inhibition of adenylate cyclase activity and both N-type and L-type calcium channels, activation of inward rectifying potassium channels, mitogen-activated protein kinase (MAPK), phospholipase C (PLC), phosphoinositide/protein kinase (PKC), phosphoinositide 3-kinase (PI3K) and regulation of NF-kappa-B. Also couples to adenylate cyclase stimulatory G alpha proteins. The selective temporal coupling to G-proteins and subsequent signaling can be regulated by RGSZ proteins, such as RGS9, RGS17 and RGS4. Phosphorylation by members of the GPRK subfamily of Ser/Thr protein kinases and association with beta-arrestins is involved in short-term receptor desensitization. Beta-arrestins associate with the GPRK-phosphorylated receptor and uncouple it from the G-protein thus terminating signal transduction. The phosphorylated receptor is internalized through endocytosis via clathrin-coated pits which involves beta-arrestins. The activation of the ERK pathway occurs either in a G-protein-dependent or a beta-arrestin-dependent manner and is regulated by agonist-specific receptor phosphorylation. Acts as a class A G-protein coupled receptor (GPCR) which dissociates from beta-arrestin at or near the plasma membrane and undergoes rapid recycling. Receptor down-regulation pathways are varying with the agonist and occur dependent or independent of G-protein coupling. Endogenous ligands induce rapid desensitization, endocytosis and recycling. Heterooligomerization with other GPCRs can modulate agonist binding, signaling and trafficking properties. Its function is as follows. Isoform 9 is involved in morphine-induced scratching and seems to cross-activate GRPR in response to morphine. The protein is Mu-type opioid receptor (Oprm1) of Mus musculus (Mouse).